The sequence spans 67 residues: DNA-directed RNA polymerase subunit omega (67 aa).

Belongs to the RNA polymerase subunit omega family. As to quaternary structure, the RNAP catalytic core consists of 2 alpha, 1 beta, 1 beta' and 1 omega subunit. When a sigma factor is associated with the core the holoenzyme is formed, which can initiate transcription.

It catalyses the reaction RNA(n) + a ribonucleoside 5'-triphosphate = RNA(n+1) + diphosphate. Functionally, promotes RNA polymerase assembly. Latches the N- and C-terminal regions of the beta' subunit thereby facilitating its interaction with the beta and alpha subunits. The chain is DNA-directed RNA polymerase subunit omega from Nitrosomonas eutropha (strain DSM 101675 / C91 / Nm57).